The chain runs to 163 residues: Nucleotide-binding protein MAV_4575 (163 aa).

It belongs to the YajQ family.

Nucleotide-binding protein. In Mycobacterium avium (strain 104), this protein is Nucleotide-binding protein MAV_4575.